The sequence spans 201 residues: uncharacterized protein (201 aa).

An N-terminal signal peptide occupies residues 1-28 (MMTFKNLRYGLSSSVVLAASLFSVLSYA).

The protein belongs to the fimbrial protein family.

It is found in the fimbrium. In terms of biological role, part of the yadCKLM-htrE-yadVN fimbrial operon. Could contribute to adhesion to various surfaces in specific environmental niches. This is an uncharacterized protein from Escherichia coli (strain K12).